A 164-amino-acid chain; its full sequence is Monothiol glutaredoxin-S10 (164 aa).

The Glutaredoxin domain maps to 60–161; it reads EDSVKRTLAD…TMLSELDIDV (102 aa). Cys80 is a binding site for [2Fe-2S] cluster.

Belongs to the glutaredoxin family. CPYC subfamily.

It is found in the cytoplasm. Functionally, may only reduce GSH-thiol disulfides, but not protein disulfides. This chain is Monothiol glutaredoxin-S10 (GRXS10), found in Oryza sativa subsp. japonica (Rice).